A 230-amino-acid chain; its full sequence is Claudin-2 (230 aa).

At 1 to 7 (MASLGLQ) the chain is on the cytoplasmic side. Residues 8–28 (LVGYVLGLLGLLGTVIAMLLP) form a helical membrane-spanning segment. Topologically, residues 29–81 (SWRTSSYVGASIVTAVGFSKGLWMECATHSTGITQCDIYSTMLGLPADIQAAQ) are extracellular. Cys-54 and Cys-64 form a disulfide bridge. Residues 82–102 (AMMVTSSAMSSLACIVSVVGM) form a helical membrane-spanning segment. The Cytoplasmic portion of the chain corresponds to 103-116 (RCTVFFQESRAKDR). A helical membrane pass occupies residues 117–137 (VAVVGGVFFILGGLLGFIPVA). At 138 to 162 (WNLHGILRDFYSPLVPDSMKFEIGE) the chain is on the extracellular side. The helical transmembrane segment at 163–183 (ALYLGIISSLFSLIAGIFLCF) threads the bilayer. The Cytoplasmic portion of the chain corresponds to 184–230 (SCSPQGNRSNYYDAYQAQPLATRSSPRPGQAPKGKSEFNSYSLTGYV). The disordered stretch occupies residues 205-230 (TRSSPRPGQAPKGKSEFNSYSLTGYV). A Glycyl lysine isopeptide (Lys-Gly) (interchain with G-Cter in SUMO) cross-link involves residue Lys-218. Ser-219 and Ser-223 each carry phosphoserine. Over residues 220-230 (EFNSYSLTGYV) the composition is skewed to polar residues. Residues 229–230 (YV) form an interaction with TJP1, TJP2 and TJP3 region.

The protein belongs to the claudin family. Can form homo- and heteropolymers with other claudins to mediate paracellular barrier and channel functions of tight junctions in response to physiological stimuli. Homopolymers interact with CLDN3, but not CLDN1, homopolymers. Directly interacts with TJP1/ZO-1, TJP2/ZO-2 and TJP3/ZO-3. In terms of processing, the disulfide bond is necessary for pore formation, but is not required for correct protein trafficking.

It is found in the cell junction. The protein resides in the tight junction. It localises to the cell membrane. The enzyme catalyses Na(+)(in) = Na(+)(out). It catalyses the reaction K(+)(in) = K(+)(out). It carries out the reaction Rb(+)(in) = Rb(+)(out). The catalysed reaction is Li(+)(in) = Li(+)(out). The enzyme catalyses Cs(+)(in) = Cs(+)(out). It catalyses the reaction Ca(2+)(in) = Ca(2+)(out). It carries out the reaction methylamine(out) = methylamine(in). The catalysed reaction is choline(out) = choline(in). The enzyme catalyses H2O(in) = H2O(out). Forms paracellular channels: polymerizes in tight junction strands with cation- and water-selective channels through the strands, conveying epithelial permeability in a process known as paracellular tight junction permeability. In intestinal epithelium, allows for sodium and water fluxes from the peritoneal side to the lumen of the intestine to regulate nutrient absorption and clear enteric pathogens as part of mucosal immune response. In kidney, allows passive sodium and calcium reabsorption across proximal tubules from the lumen back to the bloodstream. In the hepatobiliary tract, allows paracellular water and cation fluxes in the hepatic perivenous areas and biliary epithelium to generate bile flow and maintain osmotic gradients. The chain is Claudin-2 (CLDN2) from Bos taurus (Bovine).